A 502-amino-acid chain; its full sequence is Protein MGF 505-5R (502 aa).

The protein belongs to the asfivirus MGF 505 family.

Plays a role in virus cell tropism, and may be required for efficient virus replication in macrophages. This chain is Protein MGF 505-5R, found in Ornithodoros (relapsing fever ticks).